The following is a 309-amino-acid chain: Homoserine O-succinyltransferase (309 aa).

Catalysis depends on cysteine 142, which acts as the Acyl-thioester intermediate. Residues lysine 163 and serine 192 each contribute to the substrate site. Catalysis depends on histidine 235, which acts as the Proton acceptor. Glutamate 237 is a catalytic residue. Position 249 (arginine 249) interacts with substrate.

Belongs to the MetA family.

The protein localises to the cytoplasm. The enzyme catalyses L-homoserine + succinyl-CoA = O-succinyl-L-homoserine + CoA. The protein operates within amino-acid biosynthesis; L-methionine biosynthesis via de novo pathway; O-succinyl-L-homoserine from L-homoserine: step 1/1. In terms of biological role, transfers a succinyl group from succinyl-CoA to L-homoserine, forming succinyl-L-homoserine. This Photorhabdus laumondii subsp. laumondii (strain DSM 15139 / CIP 105565 / TT01) (Photorhabdus luminescens subsp. laumondii) protein is Homoserine O-succinyltransferase.